The chain runs to 718 residues: Kinesin-like protein KIF2C (718 aa).

A globular region spans residues 1–248; the sequence is MESLPARLFP…CHPLTLTDPT (248 aa). Phosphoserine occurs at positions 3 and 19. Positions 86-111 are disordered; the sequence is PKQKRRSVNSKIPAPKEGLRSRSTRM. Phosphoserine; by AURKB is present on S92. The Microtubule tip localization signal signature appears at 95 to 98; that stretch reads SKIP. Phosphoserine occurs at positions 106, 108, 112, 163, and 186. The segment at 201 to 232 is negative regulator of microtubule-binding; that stretch reads EKRAQNSEIRIKRAQEYDSSFPNWEFARMIKE. Residues 252–582 form the Kinesin motor domain; the sequence is RICVCVRKRP…LRYADRVKEL (331 aa). ATP contacts are provided by residues R258 and 342–349; that span reads GQTGSGKT. Positions 409-412 match the Nuclear localization signal motif; it reads KKAK. S513 and S626 each carry phosphoserine. 2 coiled-coil regions span residues 613-651 and 689-716; these read NFKE…IIQQ and ALRE…SKKR.

It belongs to the TRAFAC class myosin-kinesin ATPase superfamily. Kinesin family. MCAK/KIF2 subfamily. As to quaternary structure, interacts with CENPH. Interacts with MTUS2/TIP150; the interaction is direct. Interacts with MAPRE1; the interaction is direct, regulated by phosphorylation and is probably required for targeting to growing microtubule plus ends. Interacts with KIF18B at microtubule tips; this interaction increases the affinity of both partners for microtubule plus ends and is required for robust microtubule depolymerization. Phosphorylation by AURKA or AURKB strongly reduces KIF18B-binding. Phosphorylation by AURKB, regulates association with centromeres and kinetochores and the microtubule depolymerization activity. Post-translationally, ubiquitinated.

It localises to the cytoplasm. Its subcellular location is the cytoskeleton. It is found in the nucleus. The protein resides in the chromosome. The protein localises to the centromere. It localises to the kinetochore. Functionally, in complex with KIF18B, constitutes the major microtubule plus-end depolymerizing activity in mitotic cells. Regulates the turnover of microtubules at the kinetochore and functions in chromosome segregation during mitosis. Plays a role in chromosome congression and is required for the lateral to end-on conversion of the chromosome-microtubule attachment. This chain is Kinesin-like protein KIF2C (KIF2C), found in Cricetulus griseus (Chinese hamster).